The following is a 180-amino-acid chain: Endothelin-2 (180 aa).

The first 26 residues, 1 to 26, serve as a signal peptide directing secretion; that stretch reads MVALPTAWCSVALALLVALHEGKSQS. The propeptide occupies 27-47; sequence AATSEEPPAPSARARGSHLRL. 2 disulfide bridges follow: Cys50-Cys64 and Cys52-Cys60. The propeptide occupies 71–180; sequence VNTPGQTAPY…ESSHSRWRKR (110 aa). The segment at 97 to 112 is endothelin-like; it reads CECYSTRDSACVTFCH. Residues 157-180 form a disordered region; sequence NFTRHQQQKATREPESSHSRWRKR.

Belongs to the endothelin/sarafotoxin family.

It localises to the secreted. Its function is as follows. Endothelins are endothelium-derived vasoconstrictor peptides. This is Endothelin-2 (EDN2) from Atelerix albiventris (Middle-African hedgehog).